Reading from the N-terminus, the 377-residue chain is Meiotic driver cw9 (377 aa).

Disordered stretches follow at residues 1–49 and 64–100; these read MKNK…DLNN and NKSTTPPDYDENRLPITDEGNNPPNTHRENHSSGTTD. Positions 11–29 are enriched in basic and acidic residues; it reads SMDEMSAKNDNEIDLEKGP. The next 7 membrane-spanning stretches (helical) occupy residues 105 to 125, 142 to 162, 172 to 192, 218 to 238, 252 to 272, 276 to 296, and 306 to 326; these read FLIKLLISFTSIILFNAPAVC, WTLFGFWCLVCTLALLFLTYF, VTIIFLAQCIKVTAVFLAQCV, VVIIWLLWVVICYTLFLRSKF, CSISAALLLFLLYVRLPFWTL, FSGLFQVLGVQSCVVIVTKGL, and ATGYEIEVSSLFVIGNFLFFY.

This sequence belongs to the WTF family. As to quaternary structure, homomer. Forms protein aggregates. The two isoforms can interact with each other and with themselves. High sequence similarity is required for their interaction.

The protein resides in the spore membrane. The protein localises to the vacuole membrane. Its subcellular location is the ascus epiplasm. It is found in the cytoplasm. It localises to the endoplasmic reticulum membrane. In terms of biological role, promotes unequal transmission of alleles from the parental zygote to progeny spores by acting as poison/antidote system where the poison and antidote proteins are produced from the same locus; the poison component is trans-acting and targets all spores within an ascus whereas the antidote component is spore-specific, leading to poisoning of all progeny that do not inherit the allele. Its function is as follows. Localizes isoform 2 to the vacuole thereby facilitating its degradation. Functionally, forms toxic aggregates that disrupt spore maturation. This is Meiotic driver cw9 from Schizosaccharomyces pombe (Fission yeast).